Here is a 287-residue protein sequence, read N- to C-terminus: ATP synthase gamma chain (287 aa).

It belongs to the ATPase gamma chain family. F-type ATPases have 2 components, CF(1) - the catalytic core - and CF(0) - the membrane proton channel. CF(1) has five subunits: alpha(3), beta(3), gamma(1), delta(1), epsilon(1). CF(0) has three main subunits: a, b and c.

It is found in the cell inner membrane. Its function is as follows. Produces ATP from ADP in the presence of a proton gradient across the membrane. The gamma chain is believed to be important in regulating ATPase activity and the flow of protons through the CF(0) complex. This is ATP synthase gamma chain from Xylella fastidiosa (strain M23).